A 654-amino-acid chain; its full sequence is MKLSLVAAMLLLLSAARAEEEDKKEDVGTVVGIDLGTTYSCVGVFKNGRVEIIANDQGNRITPPYVAFTPEGERLIGDAAKNQLTSNPENTVFDAKRLIGRTWNDPSVQQDIKFLPFKVVEKKTKPYIQVDIGGGQTKTFAPEEISAMVLTKMKETAEAYLGKKVTHAVVTVPAYFNDAQRQATKDAGTIAGLNVMRIINEPTAAAIAYGLDKREGEKNILVFDLGGGTFDVSLLTIDNGVFEVVATNGDTHLGGEDFDQRVMEHFIKLYKKKTGKDVRKDNRAVQKLRREVEKAKRALSSQHQARIEIESFYEGEDFSETLTRAKFEELNMDLFRSTMKPVQKVLEDSDLKKSDIDEIVLVGGSTRIPKIQQLVKEFFNGKEPSRGINPDEAVAYGAAVQAGVLSGDQDTGDLALLDVCPLTLGIETVGGVMTKLIPRNTVVPTKKSQIFSTASDNQPTVTIKVYEGERPLTKDNHLLGTFDLTGIPPAPRGVPQIEVTFEIDVNGILRVTAEDKGTGNKNKITITNDQNRLTPEEIERMVNDAEKFAEEDKKLKERIDTRNELESYAYSLKNQIGDKEKLGGKLSSEDKETMEKAVEEKIEWLESHQDADIEDFKAKKKELEEIVQPIISKLYGSAGPPPTGEEDTAEKDEL.

A signal peptide spans 1–18; sequence MKLSLVAAMLLLLSAARA. Residues 1-80 are required for interaction with ELAPOR1; sequence MKLSLVAAML…EGERLIGDAA (80 aa). Position 36–39 (36–39) interacts with ATP; the sequence is GTTY. Residue S86 is modified to Phosphoserine. An ATP-binding site is contributed by K96. An N6-acetyllysine modification is found at K125. Residues 125-280 are nucleotide-binding (NBD); the sequence is KPYIQVDIGG…KKKTGKDVRK (156 aa). Y160 bears the 3'-nitrotyrosine mark. K213 is subject to N6-acetyllysine. 227 to 229 is a binding site for ATP; it reads GGT. N6-acetyllysine is present on K271. 293–300 is an ATP binding site; sequence EKAKRALS. N6-acetyllysine is present on K326. A Glycyl lysine isopeptide (Lys-Gly) (interchain with G-Cter in SUMO2) cross-link involves residue K352. K353 bears the N6-acetyllysine; alternate mark. A Glycyl lysine isopeptide (Lys-Gly) (interchain with G-Cter in SUMO1); alternate cross-link involves residue K353. An ATP-binding site is contributed by 364-367; that stretch reads GSTR. The tract at residues 409 to 419 is interdomain linker; sequence QDTGDLALLDV. Residues 420–500 form a substrate-binding (SBD) region; it reads CPLTLGIETV…PRGVPQIEVT (81 aa). K447 is subject to N6-succinyllysine. At R492 the chain carries Omega-N-methylarginine. O-AMP-threonine; alternate is present on T518. T518 is subject to Phosphothreonine; alternate. N6,N6,N6-trimethyllysine; by METTL21A; in vitro is present on K585. N6,N6-dimethyllysine; alternate is present on K585. At K585 the chain carries N6-methyllysine; alternate. K591 is modified (N6-methyllysine). Positions 633–654 are disordered; that stretch reads KLYGSAGPPPTGEEDTAEKDEL. 2 positions are modified to phosphothreonine: T643 and T648. Residues 644-654 show a composition bias toward acidic residues; it reads GEEDTAEKDEL. The Prevents secretion from ER motif lies at 651 to 654; sequence KDEL.

Belongs to the heat shock protein 70 family. As to quaternary structure, monomer and homooligomer; homooligomerization via the interdomain linker inactivates the chaperone activity and acts as a storage of HSPA5/BiP molecules. Interacts with DNAJC1 (via J domain). Component of an EIF2 complex at least composed of CELF1/CUGBP1, CALR, CALR3, EIF2S1, EIF2S2, HSP90B1 and HSPA5. Part of a large chaperone multiprotein complex comprising DNAJB11, HSP90B1, HSPA5, HYOU, PDIA2, PDIA4, PDIA6, PPIB, SDF2L1, UGGT1 and very small amounts of ERP29, but not, or at very low levels, CALR nor CANX. Interacts with TMEM132A and TRIM21. May form a complex with ERLEC1, OS9, SEL1L and SYVN1. Interacts with DNAJC10. Interacts with DNAJB9/ERdj4; leading to recruit HSPA5/BiP to ERN1/IRE1. Interacts with ERN1/IRE1 (via luminal domain); the interaction takes place following interaction with DNAJB9/ERdj4 and leads to inactivate ERN1/IRE1, the interaction also competitively inhibits ERN1 interaction with MANF. Interacts directly with MANF (via SAP domain); the interaction inhibits ATP binding to HSPA5/BiP and subsequent nucleotide exchange. Interacts with EIF2AK3/PERK (via luminal domain); interaction leads to inactivate EIF2AK3/PERK. Interacts with MX1. Interacts with METTL23. Interacts with CEMIP; the interaction induces calcium leakage from the endoplasmic reticulum and cell migration. Interacts with PCSK4 form; the interaction takes place in the endoplasmic reticulum. Interacts with CIPC. Interacts with CCDC88B (via C-terminus); the interaction opposes ERN1-mediated JNK activation, protecting against apoptosis. Interacts with INPP5K; necessary for INPP5K localization at the endoplasmic reticulum. Interacts with MANF; the interaction is direct. Interacts with LOXL2; leading to activate the ERN1/IRE1-XBP1 pathway of the unfolded protein response. Interacts with CLU under stressed condition; interaction increases CLU protein stability; facilitates its retrotranslocation and redistribution to the mitochondria; cooperatively suppress stress-induced apoptosis by stabilizing mitochondrial membrane integrity. Interacts with CCDC47. Interacts with CLN3. Interacts with ELAPOR1; may regulate the function of HSPA5 in apoptosis and cell proliferation. Interacts with CASP7. Interacts with ILDR2; the interaction stabilizes ILDR2 expression. Interacts with ADAM7. In unstressed cells, AMPylation at Thr-518 by FICD inactivates the chaperome activity: AMPylated form is locked in a relatively inert state and only weakly stimulated by J domain-containing proteins. In response to endoplasmic reticulum stress, de-AMPylation by the same protein, FICD, restores the chaperone activity.

It localises to the endoplasmic reticulum lumen. The protein localises to the melanosome. The protein resides in the cytoplasm. It is found in the cell surface. The catalysed reaction is ATP + H2O = ADP + phosphate + H(+). With respect to regulation, the chaperone activity is regulated by ATP-induced allosteric coupling of the nucleotide-binding (NBD) and substrate-binding (SBD) domains. In the ADP-bound and nucleotide-free (apo) states, the two domains have little interaction. In contrast, in the ATP-bound state the two domains are tightly coupled, which results in drastically accelerated kinetics in both binding and release of polypeptide substrates. J domain-containing co-chaperones (DNAJB9/ERdj4 or DNAJC10/ERdj5) stimulate the ATPase activity and are required for efficient substrate recognition by HSPA5/BiP. Homooligomerization inactivates participating HSPA5/BiP protomers and probably act as reservoirs to store HSPA5/BiP molecules when they are not needed by the cell. Functionally, endoplasmic reticulum chaperone that plays a key role in protein folding and quality control in the endoplasmic reticulum lumen. Involved in the correct folding of proteins and degradation of misfolded proteins via its interaction with DNAJC10/ERdj5, probably to facilitate the release of DNAJC10/ERdj5 from its substrate. Acts as a key repressor of the EIF2AK3/PERK and ERN1/IRE1-mediated unfolded protein response (UPR). In the unstressed endoplasmic reticulum, recruited by DNAJB9/ERdj4 to the luminal region of ERN1/IRE1, leading to disrupt the dimerization of ERN1/IRE1, thereby inactivating ERN1/IRE1. Also binds and inactivates EIF2AK3/PERK in unstressed cells. Accumulation of misfolded protein in the endoplasmic reticulum causes release of HSPA5/BiP from ERN1/IRE1 and EIF2AK3/PERK, allowing their homodimerization and subsequent activation. Plays an auxiliary role in post-translational transport of small presecretory proteins across endoplasmic reticulum (ER). May function as an allosteric modulator for SEC61 channel-forming translocon complex, likely cooperating with SEC62 to enable the productive insertion of these precursors into SEC61 channel. Appears to specifically regulate translocation of precursors having inhibitory residues in their mature region that weaken channel gating. May also play a role in apoptosis and cell proliferation. The protein is Endoplasmic reticulum chaperone BiP of Pongo abelii (Sumatran orangutan).